A 91-amino-acid polypeptide reads, in one-letter code: Preprofallaxidin-2 (91 aa).

The signal sequence occupies residues 1-22 (MASLKKSLFLVLFLGLVSLSIC). Residues 23 to 49 (EKEKRENEGNENEEEEENHEEGSEEKR) constitute a propeptide that is removed on maturation. Positions 24–49 (KEKRENEGNENEEEEENHEEGSEEKR) are disordered. Over residues 31–41 (GNENEEEEENH) the composition is skewed to acidic residues. Leu65 carries the post-translational modification Leucine amide. A propeptide spanning residues 69–73 (SEEKR) is cleaved from the precursor. Position 89 is a leucine amide (Leu89).

The protein belongs to the frog skin active peptide (FSAP) family. Dermaseptin subfamily. As to expression, expressed by the skin glands.

It is found in the secreted. Its function is as follows. Fallaxidin-3.1 shows antibacterial activity against the Gram-positive bacteria E.faecalis (MIC=100 uM) and L.lactis (MIC=100 uM). No antibacterial activity against the Gram-positive bacteria B.cereus, L.innocua, M.luteus, S.epidermidis, S.uberis and S.aureus, or the Gram-negative bacteria E.cloacae and E.coli. In terms of biological role, fallaxidin-3.2 shows antibacterial activity against the Gram-positive bacteria E.faecalis (MIC=100 uM) and L.lactis (MIC=500 uM). No antibacterial activity against the Gram-positive bacteria B.cereus, L.innocua, M.luteus, S.epidermidis, S.uberis and S.aureus, or the Gram-negative bacteria E.cloacae and E.coli. The sequence is that of Preprofallaxidin-2 from Litoria fallax (Eastern dwarf tree frog).